Reading from the N-terminus, the 506-residue chain is Acetaldehyde dehydrogenase 2 (506 aa).

Residue 240–245 (GETTTG) coordinates NAD(+). Active-site residues include glutamate 262 and cysteine 301.

This sequence belongs to the aldehyde dehydrogenase family.

The catalysed reaction is an aldehyde + NAD(+) + H2O = a carboxylate + NADH + 2 H(+). It participates in alcohol metabolism; ethanol degradation; acetate from ethanol: step 2/2. It functions in the pathway ketone degradation; acetoin degradation. Its function is as follows. Involved in the catabolism of acetoin and ethanol. This chain is Acetaldehyde dehydrogenase 2 (acoD), found in Cupriavidus necator (strain ATCC 17699 / DSM 428 / KCTC 22496 / NCIMB 10442 / H16 / Stanier 337) (Ralstonia eutropha).